The primary structure comprises 138 residues: Thyrotropin subunit beta (138 aa).

Residues 1–20 form the signal peptide; the sequence is MTATFLMSLLFGLAFGQTMS. Cystine bridges form between Cys-22–Cys-72, Cys-36–Cys-87, Cys-39–Cys-125, Cys-47–Cys-103, Cys-51–Cys-105, and Cys-108–Cys-115. Asn-43 carries N-linked (GlcNAc...) asparagine glycosylation. Positions 133–138 are excised as a propeptide; the sequence is LVGFPV.

Belongs to the glycoprotein hormones subunit beta family. In terms of assembly, heterodimer of a common alpha chain and a unique beta chain which confers biological specificity to thyrotropin, lutropin, follitropin and gonadotropin.

Its subcellular location is the secreted. Indispensable for the control of thyroid structure and metabolism. The protein is Thyrotropin subunit beta (TSHB) of Monodelphis domestica (Gray short-tailed opossum).